Here is a 254-residue protein sequence, read N- to C-terminus: Uridylate kinase (254 aa).

Residue 9–12 (KLSG) coordinates ATP. G51 contacts UMP. Residues G52 and R56 each contribute to the ATP site. UMP is bound by residues D72 and 133-140 (SGNPFFTT). ATP-binding residues include T160, Y166, and D169.

Belongs to the UMP kinase family. Homohexamer.

It is found in the cytoplasm. The catalysed reaction is UMP + ATP = UDP + ADP. It functions in the pathway pyrimidine metabolism; CTP biosynthesis via de novo pathway; UDP from UMP (UMPK route): step 1/1. With respect to regulation, inhibited by UTP. Catalyzes the reversible phosphorylation of UMP to UDP. In Synechococcus sp. (strain JA-3-3Ab) (Cyanobacteria bacterium Yellowstone A-Prime), this protein is Uridylate kinase.